A 21-amino-acid polypeptide reads, in one-letter code: Natriuretic peptide TsNP (21 aa).

C5 and C21 are disulfide-bonded.

Expressed by the venom gland.

It localises to the secreted. Functionally, scorpion venom natriuretic peptide that increases the perfusion pressure, glomerular filtration rate and urinary flow in the isolated perfused rat kidney assay. Induces a decrease of the percentages of renal transport for sodium, potassium and chloride and an increase of the urinary cGMP concentration. Also down-regulates the mRNA expression of natriuretic peptide receptor 1 (NPR1) in the kidneys whereas it up-regulates those of NPR2, NPR3 and guanylyl cyclase C (GUCY2C) mRNAs. May exhibit hypotensive and vasodepressor activities. The sequence is that of Natriuretic peptide TsNP from Tityus serrulatus (Brazilian scorpion).